The following is a 285-amino-acid chain: Thrombin-like enzyme TLBm (285 aa).

A Peptidase S1 domain is found at 1 to 273; the sequence is VIGGDECNIN…HLDWSQSVIA (273 aa). Cystine bridges form between Cys-7–Cys-181, Cys-30–Cys-46, Cys-94–Cys-284, Cys-156–Cys-234, Cys-192–Cys-209, and Cys-224–Cys-249. Catalysis depends on charge relay system residues His-45 and Asp-113. Ser-228 acts as the Charge relay system in catalysis.

This sequence belongs to the peptidase S1 family. Snake venom subfamily. As to quaternary structure, monomer. In terms of processing, homologous thrombin-like enzymes are N-glycosylated. This enzyme does not contain the consensus glycosylation sites, suggesting it is not glycosylated. In terms of tissue distribution, expressed by the venom gland.

Its subcellular location is the secreted. With respect to regulation, inhibited by PMSF, disodium-EDTA, S(Dm) and soybean trypsin inhibitor (SBTI). SBTI and S(Dm) (the anti-hemorrhagic protein) acts as a non-competitive inhibitors that decrease the enzymatic activity. Thrombin-like enzyme that induces the formation of fibrin clot. Cleaves the Aalpha-chain of fibrinogen (FGA) with higher activity than the Bbeta-chain (FGB). Induces platelet aggregation in both platelet-rich plasma and in washed platelet preparations. This aggregation is strongly inhibited by preincubation of the enzyme with PMSF. The chain is Thrombin-like enzyme TLBm from Bothrops marajoensis (Marajo lancehead).